We begin with the raw amino-acid sequence, 78 residues long: Acyl carrier protein (78 aa).

The Carrier domain occupies S2–Q77. S37 is modified (O-(pantetheine 4'-phosphoryl)serine).

It belongs to the acyl carrier protein (ACP) family. In terms of processing, 4'-phosphopantetheine is transferred from CoA to a specific serine of apo-ACP by AcpS. This modification is essential for activity because fatty acids are bound in thioester linkage to the sulfhydryl of the prosthetic group.

Its subcellular location is the cytoplasm. It functions in the pathway lipid metabolism; fatty acid biosynthesis. Its function is as follows. Carrier of the growing fatty acid chain in fatty acid biosynthesis. The protein is Acyl carrier protein of Sodalis glossinidius (strain morsitans).